The sequence spans 530 residues: MSAKEKFTSLSPAEFFKRNPELAGFPNPARALYQTVRELIENSLDATDVHGILPNIKITIDLIDEARQIYKVNVVDNGIGIPPQEVPNAFGRVLYSSKYANRQTRGMYGLGVKAAVLYSQMHQDKPIEIETSPANSKRIYTFKLKIDINKNEPIIVERGSVENTRGFHGTSVAISIPGDWPKAKSRIYEYIKRTYIITPYAEFIFKDPEGNVTYYPRLTNKIPKPPQEVKPHPYGVDREEIKILINNLKRDYTIKEFLVNEFQSIGDTTADKILELAGLKPNKKVKNLTEEEITRLVETFKKYEDFRSPSADSLSVIGEDLIELGLKKIFNPDFAASITRKPKAYQGHPFIVEAGVAFGGSIPVGEEPIVLRYANKIPLIYDEKSDVIWKVVEELDWKRYGIESDQYQMVVMVHLCSTKIPYKSAGKESIAEVEDIEKEIKNALMEVARKLKQYLSEKRKEQEAKKKLLAYLKYIPEVSRSLATFLASGNKELVSKYQNEISEGLFKLISKKLDLINIEEYRKVYRVDNE.

ATP is bound by residues N42, D76, S97–K98, G106–K113, and K427.

It belongs to the TOP6B family. In terms of assembly, homodimer. Heterotetramer of two Top6A and two Top6B chains.

The enzyme catalyses ATP-dependent breakage, passage and rejoining of double-stranded DNA.. Relaxes both positive and negative superturns and exhibits a strong decatenase activity. This is Type 2 DNA topoisomerase 6 subunit B from Saccharolobus islandicus (strain Y.N.15.51 / Yellowstone #2) (Sulfolobus islandicus).